Here is a 157-residue protein sequence, read N- to C-terminus: Transcription elongation factor GreA (157 aa).

This sequence belongs to the GreA/GreB family.

Functionally, necessary for efficient RNA polymerase transcription elongation past template-encoded arresting sites. The arresting sites in DNA have the property of trapping a certain fraction of elongating RNA polymerases that pass through, resulting in locked ternary complexes. Cleavage of the nascent transcript by cleavage factors such as GreA or GreB allows the resumption of elongation from the new 3'terminus. GreA releases sequences of 2 to 3 nucleotides. This chain is Transcription elongation factor GreA, found in Mesorhizobium japonicum (strain LMG 29417 / CECT 9101 / MAFF 303099) (Mesorhizobium loti (strain MAFF 303099)).